The following is a 297-amino-acid chain: Phosphoribosylaminoimidazole-succinocarboxamide synthase (297 aa).

Belongs to the SAICAR synthetase family.

The enzyme catalyses 5-amino-1-(5-phospho-D-ribosyl)imidazole-4-carboxylate + L-aspartate + ATP = (2S)-2-[5-amino-1-(5-phospho-beta-D-ribosyl)imidazole-4-carboxamido]succinate + ADP + phosphate + 2 H(+). It participates in purine metabolism; IMP biosynthesis via de novo pathway; 5-amino-1-(5-phospho-D-ribosyl)imidazole-4-carboxamide from 5-amino-1-(5-phospho-D-ribosyl)imidazole-4-carboxylate: step 1/2. This is Phosphoribosylaminoimidazole-succinocarboxamide synthase from Corynebacterium glutamicum (strain R).